A 282-amino-acid chain; its full sequence is Transcription factor BC1 (282 aa).

Positions Thr34 to Arg123 are disordered. Residues Met45–Ser55 are compositionally biased toward polar residues. Residues His75 to Arg84 show a composition bias toward basic and acidic residues. Residues Ala109–Asp116 carry the Nuclear localization signal motif. Positions Gln113–Arg126 are basic motif; degenerate. A bHLH domain is found at Gln113–Leu163. The interval Glu127 to Leu163 is helix-loop-helix motif. Residues Pro219–Gln251 form a disordered region.

This sequence belongs to the bHLH protein family. Homodimer. Component of a nuclear cell elongation controlling complex made of ILI5/BUL1, LO9-177 and BC1. Interacts with ILI5/BUL1 only in the presence of LO9-177. Interacts with IBH1. Binds to LO9-177 in the nucleus. Interacts with BCL1. As to expression, preferentially present in anthers and leaves lamina joints. Expressed in seedlings, leaves sheaths, collars and panicles.

It is found in the nucleus. Transcription activator that contributes, together with LO9-177 and ILI5/BUL1, to the promotion of leaf inclination and grain size by modulating cell elongation. Involved in the RLI1-dependent modulation of leaf inclination by promoting lamina joint cell elongation, especially in response to phosphate (Pi) availability. In Oryza sativa subsp. japonica (Rice), this protein is Transcription factor BC1.